The primary structure comprises 766 residues: Nitrogen permease regulator 3 (766 aa).

The first 23 residues, 1 to 23 (MSSVVRPPDPCLVAIILITCSRA), serve as a signal peptide directing secretion. Disordered stretches follow at residues 33 to 140 (PNPS…WDSF), 186 to 257 (RKKR…VTDG), and 594 to 638 (EEAK…NATP). The segment covering 36-49 (SIASAPSRSNSRTK) has biased composition (polar residues). Low complexity predominate over residues 51–61 (SPRASDSSPSS). A compositionally biased stretch (acidic residues) spans 62 to 74 (DNEEGSSSDEDDL). The segment covering 89 to 110 (RRLSSGSPSTKAASQQRKSNLG) has biased composition (polar residues). Basic and acidic residues-rich tracts occupy residues 118-133 (ETPR…HELE) and 217-250 (GGEK…HPDE).

It belongs to the NPR3 family.

Mediates inactivation of the TORC1 complex in response to amino acid starvation. Required for meiotic nuclear division. The sequence is that of Nitrogen permease regulator 3 (NPR3) from Coccidioides immitis (strain RS) (Valley fever fungus).